The following is a 1314-amino-acid chain: E3 ubiquitin-protein ligase RNF123 (1314 aa).

Ala2 is modified (N-acetylalanine). The 181-residue stretch at 74-254 (VDSEDEESQG…VAFNFGSRPL (181 aa)) folds into the B30.2/SPRY domain. The disordered stretch occupies residues 460–481 (HRSSREGKDSAEDRAEAAEERP). Residues 462-481 (SSREGKDSAEDRAEAAEERP) show a composition bias toward basic and acidic residues. Ser675 is modified (phosphoserine). Arg683 bears the Asymmetric dimethylarginine mark. An interaction with NFKB1 region spans residues 968–974 (WILVRLW). Zn(2+) contacts are provided by Cys1254, Cys1257, Cys1269, His1271, Cys1274, Cys1277, Cys1288, and Cys1291. Residues 1254–1292 (CPICYAHPISAVFQPCGHKSCKACIDQHLMNNKDCFFCK) form an RING-type zinc finger.

In terms of assembly, component of the KPC complex composed of RNF123/KPC1 and UBAC1/KPC2. Interacts with UBAC1 and CDKN1B via its N-terminal domain. Interacts with RIGI (via N-terminus) and IFIH1 (via N-terminus). In terms of processing, ubiquitinated, leading to its degradation. Deubiquitinated by USP19, thereby stimulating CDKN1B ubiquitin-dependent degradation.

It is found in the cytoplasm. It carries out the reaction S-ubiquitinyl-[E2 ubiquitin-conjugating enzyme]-L-cysteine + [acceptor protein]-L-lysine = [E2 ubiquitin-conjugating enzyme]-L-cysteine + N(6)-ubiquitinyl-[acceptor protein]-L-lysine.. It functions in the pathway protein modification; protein ubiquitination. Its function is as follows. Catalytic subunit of the KPC complex that acts as E3 ubiquitin-protein ligase. Promotes the ubiquitination and proteasome-mediated degradation of CDKN1B which is the cyclin-dependent kinase inhibitor at the G0-G1 transition of the cell cycle. Also acts as a key regulator of the NF-kappa-B signaling by promoting maturation of the NFKB1 component of NF-kappa-B. Acts by catalyzing ubiquitination of the NFKB1 p105 precursor, leading to limited proteasomal degradation of NFKB1 p105 and generation of the active NFKB1 p50 subunit. Functions also as an inhibitor of innate antiviral signaling mediated by RIGI and IFIH1 independently of its E3 ligase activity. Interacts with the N-terminal CARD domains of RIGI and IFIH1 and competes with the downstream adapter MAVS. The protein is E3 ubiquitin-protein ligase RNF123 of Oryctolagus cuniculus (Rabbit).